We begin with the raw amino-acid sequence, 170 residues long: Tubulin polymerization-promoting protein family member 2 (170 aa).

Residues 105–117 (TTGVTKSTTVGGV) are compositionally biased toward low complexity. A disordered region spans residues 105–170 (TTGVTKSTTV…GAGTYDKKNQ (66 aa)). Residues 129–149 (THKERFDESGKGKGIEGREET) are compositionally biased toward basic and acidic residues.

The protein belongs to the TPPP family. In terms of tissue distribution, only expressed in male reproductive organs, including testis. Expressed in elongating spermatids at stages IV-VIII of the seminiferous epithelial cycle in testis and in mature sperm in the epididymis.

The protein resides in the cytoplasm. It localises to the cytosol. The protein localises to the cell projection. It is found in the cilium. Its subcellular location is the flagellum. In terms of biological role, probable regulator of microtubule dynamics required for sperm motility. In contrast to other members of the family, has no microtubule bundling activity. The chain is Tubulin polymerization-promoting protein family member 2 from Mus musculus (Mouse).